Here is a 271-residue protein sequence, read N- to C-terminus: Small ribosomal subunit protein uS9m (271 aa).

A mitochondrion-targeting transit peptide spans 1-11 (MFRSLAKLRCF). The segment at 251–271 (KVERKKTGQPKARKKYTWVKR) is disordered. Residues 252 to 271 (VERKKTGQPKARKKYTWVKR) show a composition bias toward basic residues.

This sequence belongs to the universal ribosomal protein uS9 family. Component of the mitochondrial small ribosomal subunit (mt-SSU). Mature yeast 74S mitochondrial ribosomes consist of a small (37S) and a large (54S) subunit. The 37S small subunit contains a 15S ribosomal RNA (15S mt-rRNA) and at least 32 different proteins. The 54S large subunit contains a 21S rRNA (21S mt-rRNA) and at least 45 different proteins.

The protein resides in the mitochondrion. Its function is as follows. Component of the mitochondrial ribosome (mitoribosome), a dedicated translation machinery responsible for the synthesis of mitochondrial genome-encoded proteins, including at least some of the essential transmembrane subunits of the mitochondrial respiratory chain. The mitoribosomes are attached to the mitochondrial inner membrane and translation products are cotranslationally integrated into the membrane. This Schizosaccharomyces pombe (strain 972 / ATCC 24843) (Fission yeast) protein is Small ribosomal subunit protein uS9m (mrps9).